A 332-amino-acid polypeptide reads, in one-letter code: Ketol-acid reductoisomerase (NAD(+)) (332 aa).

One can recognise a KARI N-terminal Rossmann domain in the interval 1-186 (MEILHDEDVD…HWTKAGILEC (186 aa)). NAD(+) is bound by residues 24–27 (YGAQ), Glu-46, Asn-55, Ser-57, and 87–90 (DEVQ). The active site involves His-112. Gly-138 is an NAD(+) binding site. A KARI C-terminal knotted domain is found at 187 to 332 (TFEQETYEDL…AEIRKLFAQK (146 aa)). Asp-195, Glu-199, Glu-231, and Glu-235 together coordinate Mg(2+). Residue Ser-256 coordinates substrate.

The protein belongs to the ketol-acid reductoisomerase family. As to quaternary structure, homodimer. The cofactor is Mg(2+).

The catalysed reaction is (2R)-2,3-dihydroxy-3-methylbutanoate + NAD(+) = (2S)-2-acetolactate + NADH + H(+). It functions in the pathway amino-acid biosynthesis; L-isoleucine biosynthesis; L-isoleucine from 2-oxobutanoate: step 2/4. It participates in amino-acid biosynthesis; L-valine biosynthesis; L-valine from pyruvate: step 2/4. Its function is as follows. Involved in the biosynthesis of branched-chain amino acids (BCAA). Catalyzes an alkyl-migration followed by a ketol-acid reduction of (S)-2-acetolactate (S2AL) to yield (R)-2,3-dihydroxy-isovalerate. In the isomerase reaction, S2AL is rearranged via a Mg-dependent methyl migration to produce 3-hydroxy-3-methyl-2-ketobutyrate (HMKB). In the reductase reaction, this 2-ketoacid undergoes a metal-dependent reduction by NADH to yield (R)-2,3-dihydroxy-isovalerate. The sequence is that of Ketol-acid reductoisomerase (NAD(+)) from Uncultured archaeon GZfos26G2.